We begin with the raw amino-acid sequence, 221 residues long: Jacalin-related lectin 47 (221 aa).

2 consecutive Jacalin-type lectin domains span residues 1 to 64 (MDSN…YYYP) and 71 to 217 (SEKL…HVLP).

Belongs to the jacalin lectin family.

This chain is Jacalin-related lectin 47 (JAL47), found in Arabidopsis thaliana (Mouse-ear cress).